The following is a 348-amino-acid chain: Ion-translocating oxidoreductase complex subunit D (348 aa).

5 consecutive transmembrane segments (helical) span residues L15 to A35, Y36 to I56, L67 to S87, I88 to A108, and V125 to I145. Residue T186 is modified to FMN phosphoryl threonine. The next 5 membrane-spanning stretches (helical) occupy residues L212–I232, I241–P261, L265–T285, L298–P318, and A320–Q340.

Belongs to the NqrB/RnfD family. The complex is composed of six subunits: RnfA, RnfB, RnfC, RnfD, RnfE and RnfG. FMN is required as a cofactor.

The protein localises to the cell inner membrane. Its function is as follows. Part of a membrane-bound complex that couples electron transfer with translocation of ions across the membrane. This chain is Ion-translocating oxidoreductase complex subunit D, found in Actinobacillus pleuropneumoniae serotype 3 (strain JL03).